We begin with the raw amino-acid sequence, 306 residues long: Porphobilinogen deaminase (306 aa).

Cys239 is subject to S-(dipyrrolylmethanemethyl)cysteine.

It belongs to the HMBS family. In terms of assembly, monomer. Dipyrromethane is required as a cofactor.

It carries out the reaction 4 porphobilinogen + H2O = hydroxymethylbilane + 4 NH4(+). The protein operates within porphyrin-containing compound metabolism; protoporphyrin-IX biosynthesis; coproporphyrinogen-III from 5-aminolevulinate: step 2/4. Its function is as follows. Tetrapolymerization of the monopyrrole PBG into the hydroxymethylbilane pre-uroporphyrinogen in several discrete steps. The polypeptide is Porphobilinogen deaminase (Helicobacter pylori (strain Shi470)).